The following is a 421-amino-acid chain: UDP-N-acetylglucosamine 1-carboxyvinyltransferase (421 aa).

Residue 22–23 participates in phosphoenolpyruvate binding; it reads KN. Arg93 lines the UDP-N-acetyl-alpha-D-glucosamine pocket. The Proton donor role is filled by Cys117. Residue Cys117 is modified to 2-(S-cysteinyl)pyruvic acid O-phosphothioketal. UDP-N-acetyl-alpha-D-glucosamine is bound by residues 122 to 126, Asp308, and Ile330; that span reads RPVDL.

It belongs to the EPSP synthase family. MurA subfamily.

Its subcellular location is the cytoplasm. The catalysed reaction is phosphoenolpyruvate + UDP-N-acetyl-alpha-D-glucosamine = UDP-N-acetyl-3-O-(1-carboxyvinyl)-alpha-D-glucosamine + phosphate. Its pathway is cell wall biogenesis; peptidoglycan biosynthesis. Functionally, cell wall formation. Adds enolpyruvyl to UDP-N-acetylglucosamine. This Pseudomonas putida (strain GB-1) protein is UDP-N-acetylglucosamine 1-carboxyvinyltransferase.